The chain runs to 137 residues: Nucleoside diphosphate kinase (137 aa).

Positions 10, 58, 86, 92, 103, and 113 each coordinate ATP. His116 (pros-phosphohistidine intermediate) is an active-site residue.

It belongs to the NDK family. Homotetramer. Mg(2+) is required as a cofactor.

It is found in the cytoplasm. It carries out the reaction a 2'-deoxyribonucleoside 5'-diphosphate + ATP = a 2'-deoxyribonucleoside 5'-triphosphate + ADP. The catalysed reaction is a ribonucleoside 5'-diphosphate + ATP = a ribonucleoside 5'-triphosphate + ADP. Its function is as follows. Major role in the synthesis of nucleoside triphosphates other than ATP. The ATP gamma phosphate is transferred to the NDP beta phosphate via a ping-pong mechanism, using a phosphorylated active-site intermediate. This Helicobacter pylori (strain G27) protein is Nucleoside diphosphate kinase.